Here is a 263-residue protein sequence, read N- to C-terminus: Thymidylate kinase (263 aa).

A mitochondrion-targeting transit peptide spans 1–51; it reads MKRICSVSSVQLFSRSFRALASPRSLNYPLQCIKRSSVRMESSNFSSGVRT. Residue 66–74 participates in ATP binding; that stretch reads GLDRSGKST.

Belongs to the thymidylate kinase family. As to expression, expressed in root, rosette leaves, flower buds, flowers and siliques.

It localises to the mitochondrion. It is found in the cytoplasm. Its subcellular location is the nucleus. The protein resides in the nucleoplasm. It catalyses the reaction dTMP + ATP = dTDP + ADP. The protein operates within pyrimidine metabolism; dTTP biosynthesis. Its function is as follows. Catalyzes the conversion of dTMP to dTDP. Involved in the regulation of DNA replication. Is essential to promote the first division of the zygote. The protein is Thymidylate kinase of Arabidopsis thaliana (Mouse-ear cress).